The primary structure comprises 380 residues: Chaperone protein DnaJ (380 aa).

In terms of domain architecture, J spans 5-69 (DYYEILGVSK…QKRAHYDQFG (65 aa)). The CR-type zinc-finger motif lies at 135-217 (GKETDIEIPS…CGGTGRVKRR (83 aa)). The Zn(2+) site is built by Cys148, Cys151, Cys165, Cys168, Cys191, Cys194, Cys205, and Cys208. CXXCXGXG motif repeat units lie at residues 148 to 155 (CNTCHGTG), 165 to 172 (CPHCHGAG), 191 to 198 (CPYCGGTG), and 205 to 212 (CTTCGGTG).

This sequence belongs to the DnaJ family. In terms of assembly, homodimer. Zn(2+) is required as a cofactor.

The protein resides in the cytoplasm. Its function is as follows. Participates actively in the response to hyperosmotic and heat shock by preventing the aggregation of stress-denatured proteins and by disaggregating proteins, also in an autonomous, DnaK-independent fashion. Unfolded proteins bind initially to DnaJ; upon interaction with the DnaJ-bound protein, DnaK hydrolyzes its bound ATP, resulting in the formation of a stable complex. GrpE releases ADP from DnaK; ATP binding to DnaK triggers the release of the substrate protein, thus completing the reaction cycle. Several rounds of ATP-dependent interactions between DnaJ, DnaK and GrpE are required for fully efficient folding. Also involved, together with DnaK and GrpE, in the DNA replication of plasmids through activation of initiation proteins. The chain is Chaperone protein DnaJ from Geobacillus stearothermophilus (Bacillus stearothermophilus).